A 154-amino-acid chain; its full sequence is MECPNCHKNASRVIDSRPSDENRAIRRRRECENCGFRFTTFERVERSPLLVIKNDGTREAFNRDKILHGVMMAAQKRPISSEQLDTLVDHVENEIRKQGLNEISSKDIGNLVMKELANLDDVAYIRFASIYRQFKDVSGFMEAMEDMMAKHDKE.

The tract at residues 1–22 (MECPNCHKNASRVIDSRPSDEN) is disordered. Residues 3–34 (CPNCHKNASRVIDSRPSDENRAIRRRRECENC) fold into a zinc finger. Residues 49–139 (LLVIKNDGTR…IYRQFKDVSG (91 aa)) form the ATP-cone domain.

This sequence belongs to the NrdR family. Zn(2+) serves as cofactor.

Its function is as follows. Negatively regulates transcription of bacterial ribonucleotide reductase nrd genes and operons by binding to NrdR-boxes. The protein is Transcriptional repressor NrdR of Lactobacillus gasseri (strain ATCC 33323 / DSM 20243 / BCRC 14619 / CIP 102991 / JCM 1131 / KCTC 3163 / NCIMB 11718 / NCTC 13722 / AM63).